We begin with the raw amino-acid sequence, 243 residues long: ATP synthase subunit a (243 aa).

Transmembrane regions (helical) follow at residues 29 to 49 (NASLFMVLSTFLISLSCYVGL), 54 to 74 (VIPNPLQSIIEIIYDFIVSTI), 89 to 109 (VFTIFTFILVCNLLGILPLGF), 114 to 134 (HIAVTFAISMIVFISVTFIGF), 141 to 161 (FLHILLPQGTPMWLAPMMVLI), 177 to 197 (LAANMIAGHTIIKVIAGFVIN), 200 to 220 (IFLTPLPIAFIIILIGFEIFV), and 221 to 241 (AILQAYIFTVLTCVYLSDAVN).

This sequence belongs to the ATPase A chain family. F-type ATPases have 2 components, CF(1) - the catalytic core - and CF(0) - the membrane proton channel. CF(1) has five subunits: alpha(3), beta(3), gamma(1), delta(1), epsilon(1). CF(0) has three main subunits: a(1), b(2) and c(9-12). The alpha and beta chains form an alternating ring which encloses part of the gamma chain. CF(1) is attached to CF(0) by a central stalk formed by the gamma and epsilon chains, while a peripheral stalk is formed by the delta and b chains.

It localises to the cell inner membrane. In terms of biological role, key component of the proton channel; it plays a direct role in the translocation of protons across the membrane. In Ehrlichia ruminantium (strain Welgevonden), this protein is ATP synthase subunit a.